The primary structure comprises 786 residues: LPS-assembly protein LptD (786 aa).

Residues 1-39 (MPPKPLFPNVFPGDGAPRKRRLALALLAVPGLVPAVSYA) form the signal peptide. The disordered stretch occupies residues 767 to 786 (PGYTPLPPPPPPMSRFSNYE). A compositionally biased stretch (pro residues) spans 770 to 779 (TPLPPPPPPM).

Belongs to the LptD family. In terms of assembly, component of the lipopolysaccharide transport and assembly complex. Interacts with LptE and LptA.

It localises to the cell outer membrane. Functionally, together with LptE, is involved in the assembly of lipopolysaccharide (LPS) at the surface of the outer membrane. The chain is LPS-assembly protein LptD from Burkholderia lata (strain ATCC 17760 / DSM 23089 / LMG 22485 / NCIMB 9086 / R18194 / 383).